The primary structure comprises 118 residues: Small ribosomal subunit protein uS13 (118 aa).

Positions 93–118 are disordered; it reads RSLPVRGQRSKTNARTRKGPRKPIKK.

The protein belongs to the universal ribosomal protein uS13 family. As to quaternary structure, part of the 30S ribosomal subunit. Forms a loose heterodimer with protein S19. Forms two bridges to the 50S subunit in the 70S ribosome.

Located at the top of the head of the 30S subunit, it contacts several helices of the 16S rRNA. In the 70S ribosome it contacts the 23S rRNA (bridge B1a) and protein L5 of the 50S subunit (bridge B1b), connecting the 2 subunits; these bridges are implicated in subunit movement. Contacts the tRNAs in the A and P-sites. The chain is Small ribosomal subunit protein uS13 from Teredinibacter turnerae (strain ATCC 39867 / T7901).